The sequence spans 65 residues: Large ribosomal subunit protein uL30 (65 aa).

This sequence belongs to the universal ribosomal protein uL30 family. As to quaternary structure, part of the 50S ribosomal subunit.

The protein is Large ribosomal subunit protein uL30 of Aster yellows witches'-broom phytoplasma (strain AYWB).